A 94-amino-acid polypeptide reads, in one-letter code: uncharacterized protein (94 aa).

This is an uncharacterized protein from Haemophilus influenzae (strain ATCC 51907 / DSM 11121 / KW20 / Rd).